Here is a 414-residue protein sequence, read N- to C-terminus: Gamma-glutamyl phosphate reductase (414 aa).

The protein belongs to the gamma-glutamyl phosphate reductase family.

The protein resides in the cytoplasm. The catalysed reaction is L-glutamate 5-semialdehyde + phosphate + NADP(+) = L-glutamyl 5-phosphate + NADPH + H(+). It participates in amino-acid biosynthesis; L-proline biosynthesis; L-glutamate 5-semialdehyde from L-glutamate: step 2/2. Its function is as follows. Catalyzes the NADPH-dependent reduction of L-glutamate 5-phosphate into L-glutamate 5-semialdehyde and phosphate. The product spontaneously undergoes cyclization to form 1-pyrroline-5-carboxylate. The chain is Gamma-glutamyl phosphate reductase from Geobacillus kaustophilus (strain HTA426).